The primary structure comprises 416 residues: Leu/Ile/Val-binding protein homolog 4 (416 aa).

A signal peptide spans M1–A26.

This sequence belongs to the leucine-binding protein family.

Component of an amino-acid transport system. In Brucella melitensis biotype 1 (strain ATCC 23456 / CCUG 17765 / NCTC 10094 / 16M), this protein is Leu/Ile/Val-binding protein homolog 4.